The following is a 219-amino-acid chain: MNTDALKKMAAEAALRYIQPGMVVGVGTGSTTNFFIEALGAAKIHVDGYVASSIATENRLKAQGLNVLELNATGDIPVYIDGADEADPHFRLIKGGGGALTREKIVASAARLFVCIADDSKDRPMLGKFPLPVEVIPFARSFVARQLVKIGGSPTLRSGITTDNGNVILDVTGLDFSDPLRMEETINAIPGVLDNGIFAHRRADVMLFGSAGGVIERKA.

Residues 28–31 (TGST), 81–84 (DGAD), and 94–97 (KGGG) each bind substrate. The active-site Proton acceptor is Glu103. Lys121 serves as a coordination point for substrate.

This sequence belongs to the ribose 5-phosphate isomerase family. As to quaternary structure, homodimer.

It catalyses the reaction aldehydo-D-ribose 5-phosphate = D-ribulose 5-phosphate. Its pathway is carbohydrate degradation; pentose phosphate pathway; D-ribose 5-phosphate from D-ribulose 5-phosphate (non-oxidative stage): step 1/1. Functionally, catalyzes the reversible conversion of ribose-5-phosphate to ribulose 5-phosphate. This is Ribose-5-phosphate isomerase A from Acidithiobacillus ferrooxidans (strain ATCC 23270 / DSM 14882 / CIP 104768 / NCIMB 8455) (Ferrobacillus ferrooxidans (strain ATCC 23270)).